The chain runs to 204 residues: Ribosomal RNA small subunit methyltransferase G (204 aa).

Residues G73, F78, and R139 each contribute to the S-adenosyl-L-methionine site.

Belongs to the methyltransferase superfamily. RNA methyltransferase RsmG family.

It is found in the cytoplasm. It carries out the reaction guanosine(527) in 16S rRNA + S-adenosyl-L-methionine = N(7)-methylguanosine(527) in 16S rRNA + S-adenosyl-L-homocysteine. Specifically methylates the N7 position of guanine in position 527 of 16S rRNA. The polypeptide is Ribosomal RNA small subunit methyltransferase G (Coxiella burnetii (strain CbuG_Q212) (Coxiella burnetii (strain Q212))).